A 365-amino-acid polypeptide reads, in one-letter code: Putative 2-dehydropantoate 2-reductase (365 aa).

It belongs to the ketopantoate reductase family.

The enzyme catalyses (R)-pantoate + NADP(+) = 2-dehydropantoate + NADPH + H(+). It participates in cofactor biosynthesis; (R)-pantothenate biosynthesis; (R)-pantoate from 3-methyl-2-oxobutanoate: step 2/2. Catalyzes the NADPH-dependent reduction of ketopantoate into pantoic acid. In Arabidopsis thaliana (Mouse-ear cress), this protein is Putative 2-dehydropantoate 2-reductase (KPR).